We begin with the raw amino-acid sequence, 500 residues long: Cytochrome P450 71D7 (500 aa).

A heme-binding site is contributed by cysteine 441.

It belongs to the cytochrome P450 family. Requires heme as cofactor.

The chain is Cytochrome P450 71D7 (CYP71D7) from Solanum chacoense (Chaco potato).